Reading from the N-terminus, the 481-residue chain is GDP-fucose protein O-fucosyltransferase 2 (481 aa).

The first 22 residues, 1 to 22, serve as a signal peptide directing secretion; that stretch reads MKGRAHIWVALLLACLPPRFRN. GDP-beta-L-fucose contacts are provided by residues 59–63, 287–289, Asp365, and 382–383; these read GEGFN, HLR, and RF. The active-site Proton acceptor is the Glu60.

It belongs to the glycosyltransferase 68 family.

The protein localises to the endoplasmic reticulum. The enzyme catalyses L-seryl-[protein] + GDP-beta-L-fucose = 3-O-(alpha-L-fucosyl)-L-seryl-[protein] + GDP + H(+). The catalysed reaction is L-threonyl-[protein] + GDP-beta-L-fucose = 3-O-(alpha-L-fucosyl)-L-threonyl-[protein] + GDP + H(+). It functions in the pathway protein modification; protein glycosylation. Catalyzes the reaction that attaches fucose through an O-glycosidic linkage to a conserved serine or threonine residue in the consensus sequence C1-X-X-S/T-C2 of thrombospondin type I repeats (TSRs) where C1 and C2 are the first and second cysteines of the repeat, respectively. O-fucosylates sporozoite proteins CSP and TRAP. O-fucosylation regulates stability and intracellular trafficking of TRAP but not of CSP. Probably by regulating protein O-fucosylation, may play a role in parasite transmission to the mosquito vector and/or infection of the vertebrate host hepatocytes; however, POFUT2 involvement in transmission/infection is controversial. The polypeptide is GDP-fucose protein O-fucosyltransferase 2 (Plasmodium vivax (strain Salvador I)).